A 90-amino-acid chain; its full sequence is Caspase recruitment domain-containing protein 18 (90 aa).

In terms of domain architecture, CARD spans 1 to 90 (MADQLLRKKR…PQLASKMGLH (90 aa)).

In terms of assembly, interacts with pro-CASP1. Interacts with CARD8. In terms of tissue distribution, primarily expressed in the heart and placenta.

Inhibits generation of IL-1-beta by interacting with caspase-1 and preventing its association with RIP2. Down-regulates the release of IL1B. The sequence is that of Caspase recruitment domain-containing protein 18 (CARD18) from Homo sapiens (Human).